Consider the following 387-residue polypeptide: 3-ketoacyl-CoA thiolase (387 aa).

The active-site Acyl-thioester intermediate is Cys-91. Active-site proton acceptor residues include His-343 and Cys-373.

This sequence belongs to the thiolase-like superfamily. Thiolase family. Heterotetramer of two alpha chains (FadB) and two beta chains (FadA).

It is found in the cytoplasm. It carries out the reaction an acyl-CoA + acetyl-CoA = a 3-oxoacyl-CoA + CoA. It functions in the pathway lipid metabolism; fatty acid beta-oxidation. In terms of biological role, catalyzes the final step of fatty acid oxidation in which acetyl-CoA is released and the CoA ester of a fatty acid two carbons shorter is formed. The polypeptide is 3-ketoacyl-CoA thiolase (Shigella flexneri serotype 5b (strain 8401)).